Here is a 351-residue protein sequence, read N- to C-terminus: MSENGNKNIAIVEAFSETDKKTGEVVTLVPNTNNTVQPVALMRLGLFVPTLKSTARGRKGQMVSMDASAELKQLSLAKAEGYEDIRISGVRLDMDNDFKTWVGIIHAFAKHKVVGDTVTLPFVEFVRLCGIPTARSSAKLRKRLDSSLTRIATNTISFRSKGSDEYYVTHLVQTAKYSTKNDTVSLQADPKIFELYQFDKKVLLQLRAINELSRKESAQALYTFIESLPPDPAPISLARLRARLNLTSRTITQNATVRKAMEQLREIGYLDYTEVKRGSSVYFIIHYRRPKLRPALPPTKAAPEEPEDILPGDDQEDIIDVVPEEKEGEMVMLSKEELAILEELRKAKARK.

Residues 295-315 (ALPPTKAAPEEPEDILPGDDQ) are disordered. A compositionally biased stretch (acidic residues) spans 304–315 (EEPEDILPGDDQ).

The protein belongs to the initiator RepB protein family.

Its function is as follows. This protein is essential for plasmid replication; it is involved in copy control functions. The chain is Replication protein RepA (repA) from Salmonella typhi.